The chain runs to 343 residues: Putative kinase HI_0665 (343 aa).

Asp-209 serves as the catalytic Proton acceptor.

Belongs to the HipA Ser/Thr kinase family.

The protein is Putative kinase HI_0665 of Haemophilus influenzae (strain ATCC 51907 / DSM 11121 / KW20 / Rd).